Reading from the N-terminus, the 655-residue chain is Sphingomyelin phosphodiesterase 3 (655 aa).

The Cytoplasmic portion of the chain corresponds to 1 to 10; sequence MVLYTTPFPN. Residues 11-31 constitute an intramembrane region (helical); it reads SCLSALHAVSWALIFPCYWLV. Residues 32 to 64 lie on the Cytoplasmic side of the membrane; the sequence is DRLVASFIPTTYEKRQRADDPCYLQLFCTVLFT. 2 S-palmitoyl cysteine lipidation sites follow: cysteine 53 and cysteine 59. Positions 65–85 form an intramembrane region, helical; that stretch reads PVYLALLVAALPFAFLGFIFW. At 86–655 the chain is on the cytoplasmic side; that stretch reads SPLQSARRPY…LMVSAGEEEA (570 aa). Serine 178 carries the phosphoserine modification. 2 disordered regions span residues 209–237 and 250–320; these read VEYK…DGSL and GGRA…SNSK. Residues 211-221 show a composition bias toward basic and acidic residues; that stretch reads YKGDGGRHPSD. Serine 289 is subject to Phosphoserine. Residue glutamate 362 participates in Mg(2+) binding. S-palmitoyl cysteine attachment occurs at residues cysteine 395 and cysteine 396. The active-site Proton acceptor is the histidine 639.

This sequence belongs to the neutral sphingomyelinase family. Requires Mg(2+) as cofactor. In terms of processing, palmitoylated, palmitoylation-deficient proteins are targeted for lysosomal degradation. As to expression, in brain sections, it is restricted to neurons and especially prominent in large cells, including Purkinje cells, pyramidal cells, neurons of the dentate gyrus granular layer, and neurons in the pontine nuclei. Also present in the hypothalamic nuclei, neurons in the piriform cortex, and nuclei of the brainstem (at protein level). Mainly expressed in brain and jejunum. Weakly or not expressed in heart, spleen, lung, liver, kidney and testis.

The protein localises to the golgi apparatus membrane. It is found in the cell membrane. The enzyme catalyses a sphingomyelin + H2O = phosphocholine + an N-acylsphing-4-enine + H(+). It catalyses the reaction N-(15Z-tetracosenoyl)sphing-4-enine-1-phosphocholine + H2O = N-(15Z-tetracosenoyl)-sphing-4-enine + phosphocholine + H(+). It carries out the reaction N-(tetracosanoyl)-sphing-4-enine-1-phosphocholine + H2O = N-tetracosanoyl-sphing-4-enine + phosphocholine + H(+). The catalysed reaction is an N-(acyl)-sphingosylphosphocholine + H2O = an N-acyl-sphingoid base + phosphocholine + H(+). The enzyme catalyses 1-hexadecanoyl-sn-glycero-3-phosphocholine + H2O = 1-hexadecanoyl-sn-glycerol + phosphocholine + H(+). It catalyses the reaction 1-O-octadecyl-sn-glycero-3-phosphocholine + H2O = 1-O-octadecyl-sn-glycerol + phosphocholine + H(+). It carries out the reaction a sphingosylphosphocholine + H2O = a sphingoid base + phosphocholine + H(+). The catalysed reaction is N-(hexadecanoyl)-sphing-4-enine-1-phosphocholine + H2O = N-hexadecanoylsphing-4-enine + phosphocholine + H(+). It functions in the pathway lipid metabolism; sphingolipid metabolism. With respect to regulation, inhibited by nSMase inhibitor GW4869. Binding of anionic phospholipids (APLs) such as phosphatidylserine (PS) and phosphatidic acid (PA) increases enzymatic activity. In terms of biological role, catalyzes the hydrolysis of sphingomyelin to form ceramide and phosphocholine. Ceramide mediates numerous cellular functions, such as apoptosis and growth arrest, and is capable of regulating these 2 cellular events independently. Also hydrolyzes sphingosylphosphocholine. Binds to anionic phospholipids (APLs) such as phosphatidylserine (PS) and phosphatidic acid (PA) that modulate enzymatic activity and subcellular location. Regulates the cell cycle by acting as a growth suppressor in confluent cells. Acts as a regulator of postnatal development and participates in bone and dentin mineralization. May be involved in IL-1-beta-induced JNK activation in hepatocytes. May act as a mediator in transcriptional regulation of NOS2/iNOS via the NF-kappa-B activation under inflammatory conditions. In Rattus norvegicus (Rat), this protein is Sphingomyelin phosphodiesterase 3.